Consider the following 550-residue polypeptide: Keratin, type II cytoskeletal 74 (550 aa).

Residues 1–140 (MSRQLNIKSG…DPEIQKVRAQ (140 aa)) form a head region. A coil 1A region spans residues 141–176 (EREQIMALNNKFASFIDKVRFLEQQNQVLGTKWELL). Residues 141–468 (EREQIMALNN…KLLEGEECWM (328 aa)) form the IF rod domain. The tract at residues 177–195 (QQMDLNNCRKNLEPILEGY) is linker 1. The interval 196-287 (IGNLRKQLEM…CLYDAEVAQI (92 aa)) is coil 1B. The linker 12 stretch occupies residues 288–311 (QTHTSETSVILSMDNNRYLDLDSI). A coil 2 region spans residues 312 to 464 (IAEVRAQYED…ATYSKLLEGE (153 aa)). The tail stretch occupies residues 465–550 (ECWMSGENPS…VSSRARKAAR (86 aa)). Residues 491–550 (HPGSSASTDLGASTMASTGTSSSSSTQSGQTRAKGARVGDPKDSQDKSTPVSSRARKAAR) are disordered. The span at 502–521 (ASTMASTGTSSSSSTQSGQT) shows a compositional bias: low complexity. Basic and acidic residues predominate over residues 527–536 (RVGDPKDSQD).

The protein belongs to the intermediate filament family. As to quaternary structure, heterotetramer of two type I and two type II keratins.

In terms of biological role, has a role in hair formation. Specific component of keratin intermediate filaments in the inner root sheath (IRS) of the hair follicle. This chain is Keratin, type II cytoskeletal 74 (KRT74), found in Bos taurus (Bovine).